The primary structure comprises 101 residues: Isochorismate pyruvate lyase (101 aa).

Residues 4-94 (PEDCTGLADI…WYIAEQIKYW (91 aa)) form the Chorismate mutase domain. Positions 14, 31, 42, and 90 each coordinate substrate.

As to quaternary structure, dimer of dimers.

It carries out the reaction isochorismate = salicylate + pyruvate. The catalysed reaction is chorismate = prephenate. Its pathway is siderophore biosynthesis; salicylate biosynthesis. With respect to regulation, inhibited by endo-oxabicyclic diacid resembling to the conformation of the transition state. Its function is as follows. Involved in the incorporation of salicylate into the siderophore pyochelin. Catalyzes the elimination of the enolpyruvyl side chain from isochorismate to yield salicylate and pyruvate via a rare pericyclic hydrogen transfer mechanism from C2 to C5. PchB also catalyzes the nonphysiological Claisen rearrangement of chorismate to prephenate in which the pyruvylenol tail is transferred from a C3 ether linkage to a C1-C9 linkage. This Pseudomonas aeruginosa (strain ATCC 15692 / DSM 22644 / CIP 104116 / JCM 14847 / LMG 12228 / 1C / PRS 101 / PAO1) protein is Isochorismate pyruvate lyase.